The chain runs to 531 residues: Calcium-dependent protein kinase 21 (531 aa).

The segment covering 1-10 (MGCFSSKHRK) has biased composition (basic residues). The segment at 1–62 (MGCFSSKHRK…STPSSNPVSV (62 aa)) is disordered. G2 is lipidated: N-myristoyl glycine. Polar residues predominate over residues 48–60 (IHQQISTPSSNPV). Residues 80-338 (YSLGKELGRG…AAQVLEHPWI (259 aa)) enclose the Protein kinase domain. ATP-binding positions include 86 to 94 (LGRGQFGIT) and K109. The Proton acceptor role is filled by D204. S244 carries the phosphoserine modification. An autoinhibitory domain region spans residues 343–373 (APDKPIDSAVLSRMKQFRAMNKLKKLALKVI). EF-hand domains follow at residues 380 to 415 (EEIKGLKTMFANIDTDKSGTITYEELKTGLTRLGSR), 416 to 451 (LSETEVKQLMEAADVDGNGTIDYYEFISATMHRYKL), 452 to 487 (DRDEHVYKAFQHFDKDNSGHITRDELESAMKEYGMG), and 488 to 522 (DEASIKEVISEVDTDNDGRINFEEFCAMMRSGSTQ). Residues D393, D395, S397, T399, E404, D429, D431, N433, T435, E440, D465, D467, S469, H471, E476, D500, D502, D504, R506, and E511 each coordinate Ca(2+).

The protein belongs to the protein kinase superfamily. Ser/Thr protein kinase family. CDPK subfamily. Interacts with SLAC1 and ABI1.

It is found in the cell membrane. It carries out the reaction L-seryl-[protein] + ATP = O-phospho-L-seryl-[protein] + ADP + H(+). The enzyme catalyses L-threonyl-[protein] + ATP = O-phospho-L-threonyl-[protein] + ADP + H(+). Activated by calcium. Autophosphorylation may play an important role in the regulation of the kinase activity. Its function is as follows. May play a role in signal transduction pathways that involve calcium as a second messenger. Mediates the phosphorylation and activation of the S-type anion efflux channel SLAC1. This is Calcium-dependent protein kinase 21 (CPK21) from Arabidopsis thaliana (Mouse-ear cress).